The following is a 163-amino-acid chain: Protein-export protein SecB (163 aa).

It belongs to the SecB family. Homotetramer, a dimer of dimers. One homotetramer interacts with 1 SecA dimer.

The protein localises to the cytoplasm. Functionally, one of the proteins required for the normal export of preproteins out of the cell cytoplasm. It is a molecular chaperone that binds to a subset of precursor proteins, maintaining them in a translocation-competent state. It also specifically binds to its receptor SecA. In Brucella canis (strain ATCC 23365 / NCTC 10854 / RM-666), this protein is Protein-export protein SecB.